The sequence spans 359 residues: DNA replication and repair protein RecF (359 aa).

ATP is bound at residue 30–37 (GANGSGKT).

This sequence belongs to the RecF family.

The protein localises to the cytoplasm. Its function is as follows. The RecF protein is involved in DNA metabolism; it is required for DNA replication and normal SOS inducibility. RecF binds preferentially to single-stranded, linear DNA. It also seems to bind ATP. The chain is DNA replication and repair protein RecF from Vibrio atlanticus (strain LGP32) (Vibrio splendidus (strain Mel32)).